The primary structure comprises 577 residues: Pyruvate decarboxylase (577 aa).

The substrate site is built by aspartate 30 and histidine 116. A thiamine pyrophosphate binding region spans residues threonine 388–isoleucine 482. 3 residues coordinate Mg(2+): aspartate 450, asparagine 477, and glycine 479. Glutamate 483 contributes to the substrate binding site.

This sequence belongs to the TPP enzyme family. Homotetramer. A metal cation is required as a cofactor. Thiamine diphosphate serves as cofactor.

The enzyme catalyses a 2-oxocarboxylate + H(+) = an aldehyde + CO2. This Aspergillus parasiticus protein is Pyruvate decarboxylase (pdcA).